The chain runs to 731 residues: Alpha-1,4-glucan:maltose-1-phosphate maltosyltransferase (731 aa).

A compositionally biased stretch (basic and acidic residues) spans 1–10; sequence MEAQHNETEA. The segment at 1-31 is disordered; that stretch reads MEAQHNETEAAGKPAAKKTTRTRKPRASKQA. Residues 15 to 27 show a composition bias toward basic residues; that stretch reads AAKKTTRTRKPRA. Residues lysine 321, glutamine 381, and aspartate 416 each coordinate alpha-maltose 1-phosphate. Aspartate 451 (nucleophile) is an active-site residue. Residue asparagine 452 coordinates alpha-maltose 1-phosphate. Glutamate 480 (proton donor) is an active-site residue. Alpha-maltose 1-phosphate is bound at residue 590–591; that stretch reads KF.

It belongs to the glycosyl hydrolase 13 family. GlgE subfamily. In terms of assembly, homodimer.

It catalyses the reaction alpha-maltose 1-phosphate + [(1-&gt;4)-alpha-D-glucosyl](n) = [(1-&gt;4)-alpha-D-glucosyl](n+2) + phosphate. Functionally, maltosyltransferase that uses maltose 1-phosphate (M1P) as the sugar donor to elongate linear or branched alpha-(1-&gt;4)-glucans. Is involved in a branched alpha-glucan biosynthetic pathway from trehalose, together with TreS, Mak and GlgB. This chain is Alpha-1,4-glucan:maltose-1-phosphate maltosyltransferase, found in Bifidobacterium animalis subsp. lactis (strain Bl-04 / DGCC2908 / RB 4825 / SD5219).